The sequence spans 258 residues: Imidazole glycerol phosphate synthase subunit HisF (258 aa).

Residues aspartate 11 and aspartate 130 contribute to the active site.

The protein belongs to the HisA/HisF family. Heterodimer of HisH and HisF.

It localises to the cytoplasm. The catalysed reaction is 5-[(5-phospho-1-deoxy-D-ribulos-1-ylimino)methylamino]-1-(5-phospho-beta-D-ribosyl)imidazole-4-carboxamide + L-glutamine = D-erythro-1-(imidazol-4-yl)glycerol 3-phosphate + 5-amino-1-(5-phospho-beta-D-ribosyl)imidazole-4-carboxamide + L-glutamate + H(+). Its pathway is amino-acid biosynthesis; L-histidine biosynthesis; L-histidine from 5-phospho-alpha-D-ribose 1-diphosphate: step 5/9. Its function is as follows. IGPS catalyzes the conversion of PRFAR and glutamine to IGP, AICAR and glutamate. The HisF subunit catalyzes the cyclization activity that produces IGP and AICAR from PRFAR using the ammonia provided by the HisH subunit. This Pectobacterium carotovorum subsp. carotovorum (strain PC1) protein is Imidazole glycerol phosphate synthase subunit HisF.